A 327-amino-acid chain; its full sequence is Secondary metabolism regulator LAE1 (327 aa).

Belongs to the methyltransferase superfamily. LaeA methyltransferase family.

The protein localises to the nucleus. The enzyme catalyses L-methionyl-[protein] + S-adenosyl-L-methionine = S-methyl-L-methionyl-[protein] + S-adenosyl-L-homocysteine. Functionally, secondary metabolism regulator that controls the expression of the tenuazonic acid biosynthesis cluster. Methyltransferase that performs automethylation. No other methyl-accepting substrate has been identified yet. In Pyricularia oryzae (strain 70-15 / ATCC MYA-4617 / FGSC 8958) (Rice blast fungus), this protein is Secondary metabolism regulator LAE1.